We begin with the raw amino-acid sequence, 602 residues long: Cholinesterase (602 aa).

A signal peptide spans 1–28; the sequence is MQSRSTVIYIRFVLWFLLLWVLFEKSHT. 2 N-linked (GlcNAc...) asparagine glycosylation sites follow: Asn85 and Asn134. 144-145 contacts substrate; it reads GS. The Acyl-ester intermediate role is filled by Ser226. Position 226 is a phosphoserine (Ser226). Residues Asn269 and Asn284 are each glycosylated (N-linked (GlcNAc...) asparagine). Glu353 functions as the Charge relay system in the catalytic mechanism. Asn369 carries N-linked (GlcNAc...) asparagine glycosylation. His466 serves as the catalytic Charge relay system. 4 N-linked (GlcNAc...) asparagine glycosylation sites follow: Asn483, Asn509, Asn513, and Asn514.

It belongs to the type-B carboxylesterase/lipase family. Homotetramer; disulfide-linked. Dimer of dimers. Present in most cells except erythrocytes.

It localises to the secreted. It carries out the reaction an acylcholine + H2O = a carboxylate + choline + H(+). Functionally, esterase with broad substrate specificity. Contributes to the inactivation of the neurotransmitter acetylcholine. Can degrade neurotoxic organophosphate esters. This is Cholinesterase (BCHE) from Bos taurus (Bovine).